Consider the following 170-residue polypeptide: Probable inactive uracil-DNA glycosylase, mitochondrial (170 aa).

The transit peptide at 1 to 53 (MALSTPKTLMDFFQPAKRLKASPSSSSSFPAVSVAGRSRDLGSVANSPPRVTV) directs the protein to the mitochondrion.

Belongs to the uracil-DNA glycosylase (UDG) superfamily. UNG family.

It localises to the mitochondrion. Functionally, probable inactive paralog of AtUNG (AC Q9LIH6) generated by a gene duplication event and subsequently disrupted by at least two transposon insertions. The sequence is that of Probable inactive uracil-DNA glycosylase, mitochondrial from Arabidopsis thaliana (Mouse-ear cress).